Reading from the N-terminus, the 518-residue chain is Putative cysteine ligase BshC (518 aa).

A coiled-coil region spans residues 404 to 474 (AAASAERLAA…RARQLTRLKR (71 aa)).

This sequence belongs to the BshC family.

The chain is Putative cysteine ligase BshC from Deinococcus geothermalis (strain DSM 11300 / CIP 105573 / AG-3a).